A 129-amino-acid chain; its full sequence is Glycine cleavage system H protein (129 aa).

The region spanning 24–106 (TVVVGVTSYA…YGDGWLIKVR (83 aa)) is the Lipoyl-binding domain. Lys65 is modified (N6-lipoyllysine).

The protein belongs to the GcvH family. In terms of assembly, the glycine cleavage system is composed of four proteins: P, T, L and H. (R)-lipoate serves as cofactor.

Functionally, the glycine cleavage system catalyzes the degradation of glycine. The H protein shuttles the methylamine group of glycine from the P protein to the T protein. In Gloeobacter violaceus (strain ATCC 29082 / PCC 7421), this protein is Glycine cleavage system H protein.